Consider the following 579-residue polypeptide: Glucans biosynthesis protein G (579 aa).

Positions 1–37 are cleaved as a signal peptide; sequence MIVSPHKASRIPGNRLRKALMASAALVGLMSAGQLWA. The interval 516-579 is disordered; it reads AKPAEEAKHD…TWSYQLPADE (64 aa). Basic and acidic residues predominate over residues 517 to 539; that stretch reads KPAEEAKHDKTAAKHGKAEKAAK.

The protein belongs to the OpgD/OpgG family.

The protein resides in the periplasm. It functions in the pathway glycan metabolism; osmoregulated periplasmic glucan (OPG) biosynthesis. In terms of biological role, involved in the biosynthesis of osmoregulated periplasmic glucans (OPGs). This Pseudomonas putida (strain W619) protein is Glucans biosynthesis protein G.